A 331-amino-acid chain; its full sequence is Glycerophosphodiester phosphodiesterase 1 (331 aa).

Residues 1 to 3 (MWL) are Cytoplasmic-facing. The helical transmembrane segment at 4–24 (WEDQGGLLGPFSFVLVLLLVV) threads the bilayer. Residues 25–248 (TRSPFNACVL…PRYSVFWKQS (224 aa)) lie on the Lumenal side of the membrane. The GP-PDE domain occupies 65 to 331 (VSAIAHRGGS…SMLEDCAPHF (267 aa)). The Mg(2+) site is built by Glu-97 and Asp-99. Asn-168 carries an N-linked (GlcNAc...) asparagine glycan. Asp-174 is a binding site for Mg(2+). Residues 249 to 269 (VFVVLDILLDWSMHNVLWYLC) traverse the membrane as a helical segment. Topologically, residues 270-331 (GISAFLMQKD…SMLEDCAPHF (62 aa)) are cytoplasmic.

Belongs to the glycerophosphoryl diester phosphodiesterase family. Interacts with PRAF2. Interacts with RGS16. Mg(2+) is required as a cofactor. N-glycosylated. Detected in heart, brain, lung, liver, skeletal muscle, kidney, pituitary and testis.

The protein localises to the cell membrane. Its subcellular location is the cytoplasmic vesicle membrane. The catalysed reaction is sn-glycero-3-phospho-1D-myo-inositol + H2O = myo-inositol + sn-glycerol 3-phosphate + H(+). It catalyses the reaction 1-O-(1Z-octadecenyl)-sn-glycero-3-phospho-(N-5Z,8Z,11Z,14Z-eicosatetraenoyl)-ethanolamine + H2O = 1-O-(1Z-octadecenyl)-sn-glycero-3-phosphate + N-(5Z,8Z,11Z,14Z-eicosatetraenoyl)-ethanolamine + H(+). The enzyme catalyses 1-O-(1Z-octadecenyl)-sn-glycero-3-phospho-(N-9Z-octadecenoyl)-ethanolamine + H2O = 1-O-(1Z-octadecenyl)-sn-glycero-3-phosphate + N-(9Z-octadecenoyl) ethanolamine + H(+). It carries out the reaction 1-O-(1Z-octadecenyl)-sn-glycero-3-phospho-N-hexadecanoyl-ethanolamine + H2O = 1-O-(1Z-octadecenyl)-sn-glycero-3-phosphate + N-hexadecanoylethanolamine + H(+). The catalysed reaction is N-(4Z,7Z,10Z,13Z,16Z,19Z)-docosahexaenoyl-sn-glycero-3-phosphoethanolamine + H2O = N-(4Z,7Z,10Z,13Z,16Z,19Z)-docosahexaenoyl ethanolamine + sn-glycerol 3-phosphate + H(+). It catalyses the reaction N-eicosanoyl-sn-glycero-3-phosphoethanolamine + H2O = N-eicosanoyl ethanolamine + sn-glycerol 3-phosphate + H(+). The enzyme catalyses N-hexadecanoyl-sn-glycero-3-phosphoethanolamine + H2O = N-hexadecanoylethanolamine + sn-glycerol 3-phosphate + H(+). It carries out the reaction N-(9Z-octadecenoyl)-sn-glycero-3-phosphoethanolamine + H2O = N-(9Z-octadecenoyl) ethanolamine + sn-glycerol 3-phosphate + H(+). The catalysed reaction is N-(5Z,8Z,11Z,14Z-eicosatetraenoyl)-sn-glycero-3-phosphoethanolamine + H2O = N-(5Z,8Z,11Z,14Z-eicosatetraenoyl)-ethanolamine + sn-glycerol 3-phosphate + H(+). Inhibited by EDTA, calcium chloride, and zinc chloride. Enhanced by magnesium chloride. Glycerophosphodiester phosphodiesterase activity can be modulated by G-protein signaling pathways. Its function is as follows. Hydrolyzes the phosphodiester bond of glycerophosphodiesters such as glycerophosphoinositol (GroPIns) and glycerophosphoethanolamine (GroPEth), to yield a glycerol phosphate and an alcohol. Hydrolyzes glycerophospho-N-acylethanolamines to N-acylethanolamines in the brain and participates in bioactive N-acylethanolamine biosynthesis such as anandamide (an endocannabinoid), N-palmitoylethanolamine (an anti-inflammatory), and N-oleoylethanolamine (an anorexic). In addition, has a lysophospholipase D activity by hydrolyzing N-acyl-lysoplasmenylethanolamine (N-acyl-lysoPlsEt) to N-acylethanolamine. However lysophospholipase D activity is lower than glycerophosphodiester phosphodiesterase activity. Has little or no activity towards glycerophosphocholine. The sequence is that of Glycerophosphodiester phosphodiesterase 1 from Rattus norvegicus (Rat).